Reading from the N-terminus, the 148-residue chain is Lysozyme C (148 aa).

The signal sequence occupies residues 1-18 (MKALIILGLVLLSVTVQG). One can recognise a C-type lysozyme domain in the interval 19-148 (KIFERCELAR…VSQYVEGCGV (130 aa)). Disulfide bonds link Cys-24-Cys-146, Cys-48-Cys-134, Cys-83-Cys-99, and Cys-95-Cys-113. Catalysis depends on residues Glu-53 and Asp-71.

It belongs to the glycosyl hydrolase 22 family. Monomer.

It catalyses the reaction Hydrolysis of (1-&gt;4)-beta-linkages between N-acetylmuramic acid and N-acetyl-D-glucosamine residues in a peptidoglycan and between N-acetyl-D-glucosamine residues in chitodextrins.. Lysozymes have primarily a bacteriolytic function; those in tissues and body fluids are associated with the monocyte-macrophage system and enhance the activity of immunoagents. This chain is Lysozyme C (LYZ), found in Colobus angolensis (Angolan colobus).